The chain runs to 113 residues: Putative pterin-4-alpha-carbinolamine dehydratase (113 aa).

The protein belongs to the pterin-4-alpha-carbinolamine dehydratase family.

The catalysed reaction is (4aS,6R)-4a-hydroxy-L-erythro-5,6,7,8-tetrahydrobiopterin = (6R)-L-erythro-6,7-dihydrobiopterin + H2O. The sequence is that of Putative pterin-4-alpha-carbinolamine dehydratase from Nitrosomonas europaea (strain ATCC 19718 / CIP 103999 / KCTC 2705 / NBRC 14298).